A 498-amino-acid polypeptide reads, in one-letter code: ATP synthase subunit beta, chloroplastic (498 aa).

172–179 is an ATP binding site; sequence GGAGVGKT.

The protein belongs to the ATPase alpha/beta chains family. In terms of assembly, F-type ATPases have 2 components, CF(1) - the catalytic core - and CF(0) - the membrane proton channel. CF(1) has five subunits: alpha(3), beta(3), gamma(1), delta(1), epsilon(1). CF(0) has four main subunits: a(1), b(1), b'(1) and c(9-12).

It localises to the plastid. The protein localises to the chloroplast thylakoid membrane. It carries out the reaction ATP + H2O + 4 H(+)(in) = ADP + phosphate + 5 H(+)(out). In terms of biological role, produces ATP from ADP in the presence of a proton gradient across the membrane. The catalytic sites are hosted primarily by the beta subunits. This is ATP synthase subunit beta, chloroplastic from Coffea arabica (Arabian coffee).